The following is a 239-amino-acid chain: Thymidylate kinase (239 aa).

10-17 contacts ATP; sequence GVNRVGKS.

This sequence belongs to the thymidylate kinase family.

The catalysed reaction is dTMP + ATP = dTDP + ADP. Its pathway is pyrimidine metabolism; dTTP biosynthesis. Catalyzes the conversion of dTMP to dTDP. The chain is Thymidylate kinase (TMK) from African swine fever virus (isolate Tick/South Africa/Pretoriuskop Pr4/1996) (ASFV).